A 520-amino-acid polypeptide reads, in one-letter code: GMP synthase [glutamine-hydrolyzing] (520 aa).

The Glutamine amidotransferase type-1 domain occupies 12 to 205; it reads KIIVLDYGSQ…AISICGARGD (194 aa). The active-site Nucleophile is cysteine 89. Residues histidine 179 and glutamate 181 contribute to the active site. Residues 206–395 form the GMPS ATP-PPase domain; that stretch reads WSMDNFIDME…LGMPDEVVWR (190 aa). Residue 233–239 coordinates ATP; it reads SGGVDSS.

As to quaternary structure, homodimer.

It carries out the reaction XMP + L-glutamine + ATP + H2O = GMP + L-glutamate + AMP + diphosphate + 2 H(+). It participates in purine metabolism; GMP biosynthesis; GMP from XMP (L-Gln route): step 1/1. Functionally, catalyzes the synthesis of GMP from XMP. This chain is GMP synthase [glutamine-hydrolyzing], found in Streptococcus equi subsp. zooepidemicus (strain H70).